Reading from the N-terminus, the 229-residue chain is Peptidase E (229 aa).

Active-site charge relay system residues include S120, D135, and H157.

This sequence belongs to the peptidase S51 family.

Its subcellular location is the cytoplasm. The catalysed reaction is Dipeptidase E catalyzes the hydrolysis of dipeptides Asp-|-Xaa. It does not act on peptides with N-terminal Glu, Asn or Gln, nor does it cleave isoaspartyl peptides.. Hydrolyzes dipeptides containing N-terminal aspartate residues. May play a role in allowing the cell to use peptide aspartate to spare carbon otherwise required for the synthesis of the aspartate family of amino acids. This is Peptidase E from Shigella flexneri serotype 5b (strain 8401).